The sequence spans 491 residues: Glycogen synthase 1 (491 aa).

Lys15 is a binding site for ADP-alpha-D-glucose.

The protein belongs to the glycosyltransferase 1 family. Bacterial/plant glycogen synthase subfamily.

The enzyme catalyses [(1-&gt;4)-alpha-D-glucosyl](n) + ADP-alpha-D-glucose = [(1-&gt;4)-alpha-D-glucosyl](n+1) + ADP + H(+). It functions in the pathway glycan biosynthesis; glycogen biosynthesis. Functionally, synthesizes alpha-1,4-glucan chains using ADP-glucose. This is Glycogen synthase 1 from Synechococcus sp. (strain JA-3-3Ab) (Cyanobacteria bacterium Yellowstone A-Prime).